A 252-amino-acid chain; its full sequence is PF03932 family protein CutC (252 aa).

Belongs to the CutC family.

The protein localises to the cytoplasm. The sequence is that of PF03932 family protein CutC from Serratia proteamaculans (strain 568).